The chain runs to 120 residues: Large ribosomal subunit protein bL17 (120 aa).

This sequence belongs to the bacterial ribosomal protein bL17 family. In terms of assembly, part of the 50S ribosomal subunit. Contacts protein L32.

The sequence is that of Large ribosomal subunit protein bL17 from Mycoplasmopsis pulmonis (strain UAB CTIP) (Mycoplasma pulmonis).